A 102-amino-acid chain; its full sequence is Large ribosomal subunit protein mL63 (102 aa).

The protein belongs to the mitochondrion-specific ribosomal protein mL63 family.

It localises to the mitochondrion. The sequence is that of Large ribosomal subunit protein mL63 (Mrpl57) from Mus musculus (Mouse).